We begin with the raw amino-acid sequence, 495 residues long: UDP-N-acetylmuramoyl-L-alanyl-D-glutamate--2,6-diaminopimelate ligase (495 aa).

Position 29 (S29) interacts with UDP-N-acetyl-alpha-D-muramoyl-L-alanyl-D-glutamate. An ATP-binding site is contributed by 111-117 (GTNGKTS). UDP-N-acetyl-alpha-D-muramoyl-L-alanyl-D-glutamate contacts are provided by residues 153–154 (TT), S180, Q186, and R188. K220 is modified (N6-carboxylysine). Meso-2,6-diaminopimelate-binding positions include R384, 408-411 (DNPR), G459, and E463. The Meso-diaminopimelate recognition motif motif lies at 408-411 (DNPR).

Belongs to the MurCDEF family. MurE subfamily. The cofactor is Mg(2+). Carboxylation is probably crucial for Mg(2+) binding and, consequently, for the gamma-phosphate positioning of ATP.

It is found in the cytoplasm. It carries out the reaction UDP-N-acetyl-alpha-D-muramoyl-L-alanyl-D-glutamate + meso-2,6-diaminopimelate + ATP = UDP-N-acetyl-alpha-D-muramoyl-L-alanyl-gamma-D-glutamyl-meso-2,6-diaminopimelate + ADP + phosphate + H(+). Its pathway is cell wall biogenesis; peptidoglycan biosynthesis. Its function is as follows. Catalyzes the addition of meso-diaminopimelic acid to the nucleotide precursor UDP-N-acetylmuramoyl-L-alanyl-D-glutamate (UMAG) in the biosynthesis of bacterial cell-wall peptidoglycan. This Xylella fastidiosa (strain Temecula1 / ATCC 700964) protein is UDP-N-acetylmuramoyl-L-alanyl-D-glutamate--2,6-diaminopimelate ligase.